The following is a 417-amino-acid chain: 3-oxoacyl-[acyl-carrier-protein] synthase 2 (417 aa).

In terms of domain architecture, Ketosynthase family 3 (KS3) spans 10–416 (FPYVVVTGIA…GHNVAIAFGR (407 aa)). Residues cysteine 170, histidine 311, and histidine 346 each act as for beta-ketoacyl synthase activity in the active site.

It belongs to the thiolase-like superfamily. Beta-ketoacyl-ACP synthases family.

It localises to the cytoplasm. The catalysed reaction is an ultra-long-chain di-unsaturated fatty acyl-[ACP] + malonyl-[ACP] + H(+) = a 3-oxo-ultra-long-chain di-unsaturated fatty acyl-[ACP] + holo-[ACP] + CO2. It participates in lipid metabolism; mycolic acid biosynthesis. Its function is as follows. Part of the mycobacterial fatty acid elongation system FAS-II, which is involved in mycolic acid biosynthesis. Catalyzes the elongation of long chain acyl-ACP substrates by the addition of two carbons from malonyl-ACP to an acyl acceptor. Involved in extension of the mycolate chains to full lengths and produces longer chain multiunsaturated hydrocarbons averaging 54 carbons in length. This Mycobacterium bovis (strain ATCC BAA-935 / AF2122/97) protein is 3-oxoacyl-[acyl-carrier-protein] synthase 2 (kasB).